Consider the following 299-residue polypeptide: Polyamine aminopropyltransferase (299 aa).

The 247-residue stretch at isoleucine 6–glutamine 252 folds into the PABS domain. S-methyl-5'-thioadenosine-binding positions include glutamine 36, glutamate 120, and aspartate 147 to alanine 148. The Proton acceptor role is filled by aspartate 168.

Belongs to the spermidine/spermine synthase family. As to quaternary structure, homodimer or homotetramer.

It is found in the cytoplasm. It carries out the reaction S-adenosyl 3-(methylsulfanyl)propylamine + putrescine = S-methyl-5'-thioadenosine + spermidine + H(+). It functions in the pathway amine and polyamine biosynthesis; spermidine biosynthesis; spermidine from putrescine: step 1/1. Catalyzes the irreversible transfer of a propylamine group from the amino donor S-adenosylmethioninamine (decarboxy-AdoMet) to putrescine (1,4-diaminobutane) to yield spermidine. The protein is Polyamine aminopropyltransferase of Vibrio vulnificus (strain CMCP6).